A 282-amino-acid polypeptide reads, in one-letter code: MPKTQFQVDQNAVKKALHAAARTYDNVGMVPKAIADRLLERLDFIRLNPLCVVDVGARTGYATQQLEERYREAIVVGLDFSVAILKAASSKMMVGEYTALPFADRSVDLIFSNLAFQWSSDLQQTLQECHRVLKPGGLLLFSTVGPDTLKELHSSFADGHRHVHPFYDMHDIGDMLTQLRFTDPVMDTERLIVHYSSVPQLIKDLKQLGAQNASQDRLKGLMGKTQWRQMLTNYENCREENGALPATVEVIYGHAFGTESNSFKNANGEEVTVPIDKIIRRN.

It belongs to the methyltransferase superfamily.

The catalysed reaction is malonyl-[ACP] + S-adenosyl-L-methionine = malonyl-[ACP] methyl ester + S-adenosyl-L-homocysteine. Its pathway is cofactor biosynthesis; biotin biosynthesis. Converts the free carboxyl group of a malonyl-thioester to its methyl ester by transfer of a methyl group from S-adenosyl-L-methionine (SAM). It allows to synthesize pimeloyl-ACP via the fatty acid synthetic pathway. The protein is Malonyl-[acyl-carrier protein] O-methyltransferase 1 of Coxiella burnetii (strain RSA 493 / Nine Mile phase I).